The chain runs to 542 residues: Probable quinate permease (542 aa).

The Cytoplasmic segment spans residues 1 to 22 (MSILALVEDRPTPKEVYNWRIY). Residues 23–43 (LLAAVASFTSCMIGYDSAFIG) traverse the membrane as a helical segment. The Extracellular portion of the chain corresponds to 44–66 (TTLALSSFREEFGFNTMSKTAVN). Residues 67-87 (LVSANIVSCYQAGAFFGAFLA) form a helical membrane-spanning segment. At 88–97 (YPVGHFWGRK) the chain is on the cytoplasmic side. Residues 98–118 (WGLLFSGAIFTLGAGLMLGAD) form a helical membrane-spanning segment. The Extracellular portion of the chain corresponds to 119–130 (GDRGLGLLYGGR). The helical transmembrane segment at 131–151 (VLAGLGVGAGSNITPIYISEM) threads the bilayer. The Cytoplasmic portion of the chain corresponds to 152–159 (APPSIRGR). The helical transmembrane segment at 160-180 (LVGVYELGWQIGGLVGFWINY) threads the bilayer. Residues 181–193 (GVSETLAPSHKQW) are Extracellular-facing. A helical membrane pass occupies residues 194–214 (IIPFAVQLIPSGLLLIGAVFL). Topologically, residues 215-285 (KESPRWLFSR…AGTNKKVMYR (71 aa)) are cytoplasmic. Residues 286–306 (LFLGSMLFFWQNGSGINAINY) form a helical membrane-spanning segment. Residues 307-325 (YSPTVFKSIGLQGANTSMF) are Extracellular-facing. Residues 326-346 (STGIFGVVKTVVTFVWLLYLI) traverse the membrane as a helical segment. The Cytoplasmic portion of the chain corresponds to 347–352 (DRLGRR). Residues 353 to 373 (LLLLIGAAGASVCLFIVGAYI) traverse the membrane as a helical segment. At 374-387 (KIADPASNPTQEMT) the chain is on the extracellular side. Residues 388-408 (GGGIAAMFFFYLYTVFYTPSW) traverse the membrane as a helical segment. Residues 409–456 (NGTPWVMNSEMFEPNMRSLAQACAAASNWFWNFLISRFTPQMFAKMEY) are Cytoplasmic-facing. Residues 457 to 477 (GVWFFFASLMVLSIVFVFFLL) form a helical membrane-spanning segment. The Extracellular portion of the chain corresponds to 478–542 (PETKGIPLES…EHLSEDLPKV (65 aa)). Residues 519–542 (IEESGYSKTGDQQVEHLSEDLPKV) are disordered. Residues 531 to 542 (QVEHLSEDLPKV) show a composition bias toward basic and acidic residues.

This sequence belongs to the major facilitator superfamily. Sugar transporter (TC 2.A.1.1) family. In terms of assembly, interacts with creB. Ubiquitinated. Deubiquitinated by creB, probably to control its activity or amount.

Its subcellular location is the cell membrane. Integral membrane transporter that imports quinic acid to be catabolized as a carbon source. The protein is Probable quinate permease (qutD) of Neosartorya fischeri (strain ATCC 1020 / DSM 3700 / CBS 544.65 / FGSC A1164 / JCM 1740 / NRRL 181 / WB 181) (Aspergillus fischerianus).